Reading from the N-terminus, the 37-residue chain is Cytochrome b6-f complex subunit 5 (37 aa).

The chain crosses the membrane as a helical span at residues 5-25 (LLSGIVLGLIPITLAGLFVTA).

It belongs to the PetG family. In terms of assembly, the 4 large subunits of the cytochrome b6-f complex are cytochrome b6, subunit IV (17 kDa polypeptide, PetD), cytochrome f and the Rieske protein, while the 4 small subunits are PetG, PetL, PetM and PetN. The complex functions as a dimer.

The protein localises to the plastid. Its subcellular location is the chloroplast thylakoid membrane. Its function is as follows. Component of the cytochrome b6-f complex, which mediates electron transfer between photosystem II (PSII) and photosystem I (PSI), cyclic electron flow around PSI, and state transitions. PetG is required for either the stability or assembly of the cytochrome b6-f complex. This is Cytochrome b6-f complex subunit 5 from Chara vulgaris (Common stonewort).